The primary structure comprises 336 residues: Aspartate--ammonia ligase (336 aa).

This sequence belongs to the class-II aminoacyl-tRNA synthetase family. AsnA subfamily.

The protein resides in the cytoplasm. It catalyses the reaction L-aspartate + NH4(+) + ATP = L-asparagine + AMP + diphosphate + H(+). Its pathway is amino-acid biosynthesis; L-asparagine biosynthesis; L-asparagine from L-aspartate (ammonia route): step 1/1. This chain is Aspartate--ammonia ligase, found in Clostridium perfringens (strain 13 / Type A).